A 65-amino-acid polypeptide reads, in one-letter code: Large ribosomal subunit protein uL29 (65 aa).

This sequence belongs to the universal ribosomal protein uL29 family.

This is Large ribosomal subunit protein uL29 from Mycoplasmopsis synoviae (strain 53) (Mycoplasma synoviae).